Consider the following 409-residue polypeptide: Inactive serine protease 35 (409 aa).

An N-terminal signal peptide occupies residues M1–G20. N90 carries N-linked (GlcNAc...) asparagine glycosylation. The 281-residue stretch at V124–A404 folds into the Peptidase S1 domain. A disulfide bridge links C154 with C170. Over residues V188–R207 the composition is skewed to basic residues. The disordered stretch occupies residues V188 to W247.

The protein belongs to the peptidase S1 family. As to expression, in ovary, it localizes to the theca cells of pre-antral follicles, the theca and granulosa cells of pre-ovulatory and ovulatory follicles, as well as to the developing corpus luteum.

It is found in the secreted. The protein is Inactive serine protease 35 (Prss35) of Mus musculus (Mouse).